A 440-amino-acid chain; its full sequence is Ribosomal protein uS12 methylthiotransferase RimO (440 aa).

One can recognise an MTTase N-terminal domain in the interval 2–118 (KKAGIIHLGC…FVSLITSNGE (117 aa)). Cysteine 11, cysteine 47, cysteine 81, cysteine 154, cysteine 158, and cysteine 161 together coordinate [4Fe-4S] cluster. Residues 140–370 (ISPNFWVYVK…MSTQKEISKK (231 aa)) form the Radical SAM core domain. Residues 373–440 (AKLLGREFDV…RAYDLLGELV (68 aa)) enclose the TRAM domain.

The protein belongs to the methylthiotransferase family. RimO subfamily. It depends on [4Fe-4S] cluster as a cofactor.

It localises to the cytoplasm. It carries out the reaction L-aspartate(89)-[ribosomal protein uS12]-hydrogen + (sulfur carrier)-SH + AH2 + 2 S-adenosyl-L-methionine = 3-methylsulfanyl-L-aspartate(89)-[ribosomal protein uS12]-hydrogen + (sulfur carrier)-H + 5'-deoxyadenosine + L-methionine + A + S-adenosyl-L-homocysteine + 2 H(+). In terms of biological role, catalyzes the methylthiolation of an aspartic acid residue of ribosomal protein uS12. The polypeptide is Ribosomal protein uS12 methylthiotransferase RimO (Dictyoglomus thermophilum (strain ATCC 35947 / DSM 3960 / H-6-12)).